Here is a 632-residue protein sequence, read N- to C-terminus: Probable potassium transport system protein Kup 1 (632 aa).

12 helical membrane passes run 17 to 37 (LFYLALGSVGVVYGDIGTSPL), 60 to 80 (LISLMIWALTIIVTIKYVLFL), 106 to 126 (TAILMLLGLMGAALFLGDAMI), 146 to 166 (LADYIVPISVVILALLFVVQS), 175 to 195 (FFGPITAVWFLVMAAAGISHI), 210 to 230 (AVAFLLHEGFYGIVVLGAVFL), 254 to 274 (WFLLVFPALTLNYLGQGALVL), 292 to 312 (ALLPVVILATAATIIASQAVI), 344 to 364 (IFVPSVNAVLFIGVIFLVLGF), 370 to 390 (LATAYGISVTGAMVVTSIMAF), 401 to 421 (LPVAVIALAPLVVLEMIFLGA), and 426 to 446 (IHDGGYIPIMIATAFTVVMWT).

The protein belongs to the HAK/KUP transporter (TC 2.A.72) family.

It is found in the cell inner membrane. It catalyses the reaction K(+)(in) + H(+)(in) = K(+)(out) + H(+)(out). In terms of biological role, transport of potassium into the cell. Likely operates as a K(+):H(+) symporter. The polypeptide is Probable potassium transport system protein Kup 1 (Rhizobium johnstonii (strain DSM 114642 / LMG 32736 / 3841) (Rhizobium leguminosarum bv. viciae)).